Reading from the N-terminus, the 504-residue chain is Tyrosine-protein kinase HCK (504 aa).

A lipid anchor (N-myristoyl glycine) is attached at glycine 2. Cysteine 3 carries S-palmitoyl cysteine lipidation. The residue at position 15 (threonine 15) is a Phosphothreonine. At tyrosine 30 the chain carries Phosphotyrosine. Positions 34 to 49 are enriched in polar residues; sequence PTSTIKPGPNSNNRNT. Residues 34 to 53 form a disordered region; sequence PTSTIKPGPNSNNRNTPGIG. The 61-residue stretch at 56 to 116 folds into the SH3 domain; that stretch reads SEDIIVVALY…PSNYVARVDS (61 aa). Residues 122 to 219 enclose the SH2 domain; that stretch reads WFFKGISRKD…GLCQKLSVPC (98 aa). Position 180 is a phosphothreonine (threonine 180). Tyrosine 187 is modified (phosphotyrosine). Positions 240–493 constitute a Protein kinase domain; that stretch reads LKLEKKLGAG…YIQSVLDDFY (254 aa). ATP contacts are provided by residues 246 to 254 and lysine 268; that span reads LGAGQFGEV. The Proton acceptor role is filled by aspartate 359. Tyrosine 389 is subject to Phosphotyrosine; by autocatalysis. Serine 440 is subject to Phosphoserine. A Phosphotyrosine modification is found at tyrosine 500.

This sequence belongs to the protein kinase superfamily. Tyr protein kinase family. SRC subfamily. As to quaternary structure, interacts with ADAM15. Interacts with FASLG. Interacts with ARRB1 and ARRB2. Interacts with FCGR1A; the interaction may be indirect. Interacts with IL6ST. Interacts (via SH3 domain) with ELMO1. Interacts (via SH3 domain) with TP73. Interacts with YAP1. Interacts with ABL1 and ITGB1, and thereby recruits ABL1 to activated ITGB1. Interacts (via SH2 domain) with FLT3 (tyrosine phosphorylated). Interacts with CBL. Interacts with VAV1, WAS and RAPGEF1. Interacts (via SH3 domain) with WDCP. In terms of processing, phosphorylated on several tyrosine residues. Autophosphorylated. Becomes rapidly phosphorylated upon activation of the immunoglobulin receptors FCGR1A and FCGR2A. Phosphorylation at Tyr-389 increases kinase activity. Phosphorylation at Tyr-500 inhibits kinase activity. Kinase activity is not required for phosphorylation at Tyr-500, suggesting that this site may be a target of other kinases. Post-translationally, ubiquitinated by CBL, leading to its degradation via the proteasome. Palmitoylation requires prior myristoylation. Palmitoylation is required for caveolar localization.

It localises to the cytoplasmic vesicle. It is found in the secretory vesicle. The protein resides in the cytoplasm. Its subcellular location is the cytosol. The protein localises to the cell membrane. It localises to the membrane. It is found in the caveola. The protein resides in the cell junction. Its subcellular location is the focal adhesion. The protein localises to the cytoskeleton. It localises to the golgi apparatus. It is found in the lysosome. The protein resides in the nucleus. It catalyses the reaction L-tyrosyl-[protein] + ATP = O-phospho-L-tyrosyl-[protein] + ADP + H(+). Subject to autoinhibition, mediated by intramolecular interactions involving the SH2 and SH3 domains. Kinase activity is also regulated by phosphorylation at regulatory tyrosine residues. Phosphorylation at Tyr-389 is required for optimal activity. Phosphorylation at Tyr-500 inhibits kinase activity. Non-receptor tyrosine-protein kinase found in hematopoietic cells that transmits signals from cell surface receptors and plays an important role in the regulation of innate immune responses, including neutrophil, monocyte, macrophage and mast cell functions, phagocytosis, cell survival and proliferation, cell adhesion and migration. Acts downstream of receptors that bind the Fc region of immunoglobulins, such as FCGR1A and FCGR2A, but also CSF3R, PLAUR, the receptors for IFNG, IL2, IL6 and IL8, and integrins, such as ITGB1 and ITGB2. During the phagocytic process, mediates mobilization of secretory lysosomes, degranulation, and activation of NADPH oxidase to bring about the respiratory burst. Plays a role in the release of inflammatory molecules. Promotes reorganization of the actin cytoskeleton and actin polymerization, formation of podosomes and cell protrusions. Inhibits TP73-mediated transcription activation and TP73-mediated apoptosis. Phosphorylates CBL in response to activation of immunoglobulin gamma Fc region receptors. Phosphorylates ADAM15, BCR, ELMO1, FCGR2A, GAB1, GAB2, RAPGEF1, STAT5B, TP73, VAV1 and WAS. This chain is Tyrosine-protein kinase HCK (HCK), found in Macaca fascicularis (Crab-eating macaque).